The following is a 420-amino-acid chain: COP9 signalosome complex subunit 11 (420 aa).

The region spanning 177–346 (SIHEHPSLVD…VYYKEDLPVG (170 aa)) is the PCI domain. Residues 386–420 (VEPLNRSQDMDAFELHEQSEDEEYEEEHLEEGENV) form a disordered region. Over residues 404 to 420 (SEDEEYEEEHLEEGENV) the composition is skewed to acidic residues.

As to quaternary structure, component of a COP9 signalosome-like (CSN) complex.

It is found in the cytoplasm. The protein localises to the nucleus. In terms of biological role, component of the COP9 signalosome (CSN) complex that acts as an regulator of the ubiquitin (Ubl) conjugation pathway by mediating the deneddylation of the cullin subunit of SCF-type E3 ubiquitin-protein ligase complexes The CSN complex is involved in the regulation of the mating pheromone response. PCI8 may also be involved in transcriptional and translational control. In Eremothecium gossypii (strain ATCC 10895 / CBS 109.51 / FGSC 9923 / NRRL Y-1056) (Yeast), this protein is COP9 signalosome complex subunit 11 (PCI8).